A 534-amino-acid chain; its full sequence is Probable cytochrome c oxidase subunit 1 (534 aa).

8 helical membrane-spanning segments follow: residues 35-55 (IMYI…SLLF), 76-96 (VLIT…ALFS), 97-117 (GFGN…FPRL), 120-140 (ISFW…FIDG), 165-185 (VAIF…INLI), 202-222 (PLFV…MPVL), 254-274 (LFWF…FGIV), and 286-306 (IFGY…GFIV). His-81 provides a ligand contact to Fe(II)-heme a. His-260 and Tyr-264 together coordinate Cu cation. The segment at residues 260–264 (HPEVY) is a cross-link (1'-histidyl-3'-tyrosine (His-Tyr)). The Cu cation site is built by His-309 and His-310. Transmembrane regions (helical) follow at residues 320–340 (ALIY…IKIF) and 357–377 (MLFA…GIIL). His-395 contributes to the heme a3 binding site. A run of 3 helical transmembrane segments spans residues 396–416 (FHYT…YYWF), 433–453 (FWIT…LGLA), and 475–495 (IGAG…FYTL). His-397 serves as a coordination point for Fe(II)-heme a.

Belongs to the heme-copper respiratory oxidase family.

Its subcellular location is the cell membrane. It carries out the reaction 4 Fe(II)-[cytochrome c] + O2 + 8 H(+)(in) = 4 Fe(III)-[cytochrome c] + 2 H2O + 4 H(+)(out). It participates in energy metabolism; oxidative phosphorylation. Functionally, cytochrome c oxidase is the component of the respiratory chain that catalyzes the reduction of oxygen to water. Subunits 1-3 form the functional core of the enzyme complex. CO I is the catalytic subunit of the enzyme. Electrons originating in cytochrome c are transferred via the copper A center of subunit 2 and heme A of subunit 1 to the bimetallic center formed by heme A3 and copper B. This is Probable cytochrome c oxidase subunit 1 (ctaD) from Rickettsia prowazekii (strain Madrid E).